The chain runs to 843 residues: Protein translocase subunit SecA (843 aa).

ATP contacts are provided by residues Gln91, 109–113, and Asp498; that span reads GEGKT. Residues 796 to 825 are compositionally biased toward basic and acidic residues; it reads DFGKAEHVSAEDGKEKAKAEPYVKDEHIGR. A disordered region spans residues 796–833; the sequence is DFGKAEHVSAEDGKEKAKAEPYVKDEHIGRNDPCPCGS. Residues Cys829, Cys831, Cys840, and His841 each contribute to the Zn(2+) site.

Belongs to the SecA family. In terms of assembly, monomer and homodimer. Part of the essential Sec protein translocation apparatus which comprises SecA, SecYEG and auxiliary proteins SecDF. Other proteins may also be involved. Zn(2+) is required as a cofactor.

The protein localises to the cell membrane. It is found in the cytoplasm. It carries out the reaction ATP + H2O + cellular proteinSide 1 = ADP + phosphate + cellular proteinSide 2.. In terms of biological role, part of the Sec protein translocase complex. Interacts with the SecYEG preprotein conducting channel. Has a central role in coupling the hydrolysis of ATP to the transfer of proteins into and across the cell membrane, serving as an ATP-driven molecular motor driving the stepwise translocation of polypeptide chains across the membrane. This is Protein translocase subunit SecA from Staphylococcus saprophyticus subsp. saprophyticus (strain ATCC 15305 / DSM 20229 / NCIMB 8711 / NCTC 7292 / S-41).